The sequence spans 425 residues: Endoplasmic reticulum junction formation protein lunapark (425 aa).

The N-myristoyl glycine moiety is linked to residue glycine 2. Over 2–45 (GGLFSRWRAKPSTVEVLENIDKEIQALEEFREKNQRLQKLWVGR) the chain is Cytoplasmic. The stretch at 15–41 (VEVLENIDKEIQALEEFREKNQRLQKL) forms a coiled coil. Residues 46-66 (LIIYSSILYLFTCLIVYLWYL) traverse the membrane as a helical segment. Over 67–77 (PDEFTARLVMT) the chain is Lumenal. The helical transmembrane segment at 78 to 98 (LPFFAFPLIIWTLRTVLIFFF) threads the bilayer. The Cytoplasmic portion of the chain corresponds to 99 to 425 (SKRTERNNEA…EPSEESLVTK (327 aa)). The stretch at 101 to 128 (RTERNNEALDDLKSQKKKILEEVMEKET) forms a coiled coil. Serine 114, serine 153, serine 177, serine 182, and serine 194 each carry phosphoserine. Residues 144–242 (KKAKEFEPPS…HPPGPPLARP (99 aa)) form a disordered region. A compositionally biased stretch (pro residues) spans 186–195 (GPPPQGPVSP). Threonine 211 carries the post-translational modification Phosphothreonine. The residue at position 222 (serine 222) is a Phosphoserine. A C4-type; plays a role in ER morphology zinc finger spans residues 271–296 (CQQCFSHNGMALKEEFEYIAFRCAYC). Serine 316, serine 348, and serine 380 each carry phosphoserine. The disordered stretch occupies residues 320–425 (RQAVEGSSST…EPSEESLVTK (106 aa)). Acidic residues predominate over residues 384 to 398 (EPAENQEETENEETS). Serine 411 carries the post-translational modification Phosphoserine.

The protein belongs to the lunapark family. As to quaternary structure, homodimer; homodimerization requires the C4-type zinc finger motif and decreases during mitosis in a phosphorylation-dependent manner. In terms of processing, myristoylated; myristoylation is necessary for the endoplasmic reticulum (ER) three-way ER tubular junction formation, but is not required neither for membrane translocation, membrane topology formation, nor for the specific localization to ER membranes. Post-translationally, phosphorylated. Phosphorylation occurs at Ser-177, Ser-182, Ser-222, Ser-316 and Ser-380 during interphase. Phosphorylation occurs at Ser-114, Ser-153, Ser-194, Thr-211 and Ser-348 during mitosis; these phosphorylations reduce both its homodimerization and the ER three-way tubular junction formation. Subject to proteasomal degradation following phosphorylation during mitosis. Expressed in most tissues at basal level, with reinforcement in distal limb buds, genital bud, and in parts of the central nervous system.

Its subcellular location is the endoplasmic reticulum membrane. Functionally, endoplasmic reticulum (ER)-shaping membrane protein that plays a role in determining ER morphology. Involved in the stabilization of nascent three-way ER tubular junctions within the ER network. May also play a role as a curvature-stabilizing protein within three-way ER tubular junction network. May be involved in limb and central nervous system development. This is Endoplasmic reticulum junction formation protein lunapark from Mus musculus (Mouse).